Reading from the N-terminus, the 230-residue chain is Cytochrome c oxidase subunit 2 (230 aa).

At 1–14 (MAHPTQLGFKDAAM) the chain is on the mitochondrial intermembrane side. A helical transmembrane segment spans residues 15 to 45 (PVMEELLHFHDHALMIVLLISTLVLYIITAM). The Mitochondrial matrix segment spans residues 46–59 (VSTKLTNKYILDSQ). A helical transmembrane segment spans residues 60-87 (EIEIVWTILPAVILVLIALPSLRILYLM). The Mitochondrial intermembrane portion of the chain corresponds to 88 to 230 (DEINDPHLTI…NWSSLMLEDA (143 aa)). 6 residues coordinate Cu cation: histidine 161, cysteine 196, glutamate 198, cysteine 200, histidine 204, and methionine 207. A Mg(2+)-binding site is contributed by glutamate 198.

Belongs to the cytochrome c oxidase subunit 2 family. In terms of assembly, component of the cytochrome c oxidase (complex IV, CIV), a multisubunit enzyme composed of 14 subunits. The complex is composed of a catalytic core of 3 subunits MT-CO1, MT-CO2 and MT-CO3, encoded in the mitochondrial DNA, and 11 supernumerary subunits COX4I, COX5A, COX5B, COX6A, COX6B, COX6C, COX7A, COX7B, COX7C, COX8 and NDUFA4, which are encoded in the nuclear genome. The complex exists as a monomer or a dimer and forms supercomplexes (SCs) in the inner mitochondrial membrane with NADH-ubiquinone oxidoreductase (complex I, CI) and ubiquinol-cytochrome c oxidoreductase (cytochrome b-c1 complex, complex III, CIII), resulting in different assemblies (supercomplex SCI(1)III(2)IV(1) and megacomplex MCI(2)III(2)IV(2)). Found in a complex with TMEM177, COA6, COX18, COX20, SCO1 and SCO2. Interacts with TMEM177 in a COX20-dependent manner. Interacts with COX20. Interacts with COX16. Requires Cu cation as cofactor.

It localises to the mitochondrion inner membrane. The enzyme catalyses 4 Fe(II)-[cytochrome c] + O2 + 8 H(+)(in) = 4 Fe(III)-[cytochrome c] + 2 H2O + 4 H(+)(out). Its function is as follows. Component of the cytochrome c oxidase, the last enzyme in the mitochondrial electron transport chain which drives oxidative phosphorylation. The respiratory chain contains 3 multisubunit complexes succinate dehydrogenase (complex II, CII), ubiquinol-cytochrome c oxidoreductase (cytochrome b-c1 complex, complex III, CIII) and cytochrome c oxidase (complex IV, CIV), that cooperate to transfer electrons derived from NADH and succinate to molecular oxygen, creating an electrochemical gradient over the inner membrane that drives transmembrane transport and the ATP synthase. Cytochrome c oxidase is the component of the respiratory chain that catalyzes the reduction of oxygen to water. Electrons originating from reduced cytochrome c in the intermembrane space (IMS) are transferred via the dinuclear copper A center (CU(A)) of subunit 2 and heme A of subunit 1 to the active site in subunit 1, a binuclear center (BNC) formed by heme A3 and copper B (CU(B)). The BNC reduces molecular oxygen to 2 water molecules using 4 electrons from cytochrome c in the IMS and 4 protons from the mitochondrial matrix. This Cyprinus carpio (Common carp) protein is Cytochrome c oxidase subunit 2 (mt-co2).